Consider the following 207-residue polypeptide: MPIRYPNGQPYSRSPKQGQAKKPLPADTYSGRGMTLEQDIDEANLYYLSQQRAVVHKKPTPVQIVKVDYPKRSAAVIREAYFKQASTTDYNGVYRGAYIDFEAKETKNKTSFPLKNIHPHQVDHMREVSKHGGICFVLIRFFQSAEVFLLDAKHLIDYYDNQDVRKSIKKTEIERLGHQVKTGLHPPIDYLRTLDAVYFNGDAKERT.

The segment at Met1–Ser30 is disordered. The Mg(2+) site is built by Thr87, Asp89, Glu102, and Gln121.

This sequence belongs to the RecU family. The cofactor is Mg(2+).

It is found in the cytoplasm. It carries out the reaction Endonucleolytic cleavage at a junction such as a reciprocal single-stranded crossover between two homologous DNA duplexes (Holliday junction).. Endonuclease that resolves Holliday junction intermediates in genetic recombination. Cleaves mobile four-strand junctions by introducing symmetrical nicks in paired strands. Promotes annealing of linear ssDNA with homologous dsDNA. Required for DNA repair, homologous recombination and chromosome segregation. This is Holliday junction resolvase RecU from Shouchella clausii (strain KSM-K16) (Alkalihalobacillus clausii).